The following is a 127-amino-acid chain: Protein MGF 110-14L (127 aa).

The N-terminal stretch at 1-17 is a signal peptide; the sequence is MKVLLELLLGYSVHILA.

It belongs to the asfivirus MGF 110 family.

Functionally, plays a role in virus cell tropism, and may be required for efficient virus replication in macrophages. The protein is Protein MGF 110-14L of Ornithodoros (relapsing fever ticks).